Here is a 467-residue protein sequence, read N- to C-terminus: Protein PHOSPHATE STARVATION RESPONSE 3 (467 aa).

The disordered stretch occupies residues 227-266 (MSLPVSSCSDQEDLQDARSPAKVQLSSSRSSSGTASCNKP). Residues 262–322 (SCNKPRLRWT…HLQKYRLAKY (61 aa)) enclose the HTH myb-type domain. Residues 293–318 (PKGVLKLMKVEGLTIYHIKSHLQKYR) constitute a DNA-binding region (H-T-H motif). The span at 327–337 (KEDKKQEEKKT) shows a compositional bias: basic and acidic residues. Disordered stretches follow at residues 327–353 (KEDK…KSAQ) and 400–467 (RESI…VHDE). The span at 402 to 412 (SISSMTSTTEG) shows a compositional bias: polar residues. 2 stretches are compositionally biased toward basic and acidic residues: residues 419–428 (PMEKTEDKAE) and 438–467 (RITD…VHDE).

As to expression, expressed in the root cap and in the exodermis of the root, in the root tip of lateral roots, in the mesophyll cells of the leaf, in pollen, vascular cylinder of the anther and the veins of the lemma, palea and pistils, and in the xylem and phloem regions of large vascular bundles, small vascular bundles and diffuse vascular bundles in node I.

Its subcellular location is the nucleus. Functionally, transcription factor involved in phosphate starvation signaling. Binds to P1BS, an imperfect palindromic sequence 5'-GNATATNC-3', to promote the expression of inorganic phosphate (Pi) starvation-responsive genes. Functionally redundant with PHR1 and PHR2 in regulating Pi starvation response and Pi homeostasis. The protein is Protein PHOSPHATE STARVATION RESPONSE 3 of Oryza sativa subsp. japonica (Rice).